A 660-amino-acid chain; its full sequence is Methionine--tRNA ligase 1 (660 aa).

A 'HIGH' region motif is present at residues 15-25 (YYPSGKLHIGH). Positions 310–314 (KMSKS) match the 'KMSKS' region motif. K313 lines the ATP pocket. One can recognise a tRNA-binding domain in the interval 560 to 660 (DFFKVELRVA…QNIPNGTKIK (101 aa)).

It belongs to the class-I aminoacyl-tRNA synthetase family. MetG type 2B subfamily. Homodimer.

The protein localises to the cytoplasm. It catalyses the reaction tRNA(Met) + L-methionine + ATP = L-methionyl-tRNA(Met) + AMP + diphosphate. Is required not only for elongation of protein synthesis but also for the initiation of all mRNA translation through initiator tRNA(fMet) aminoacylation. This is Methionine--tRNA ligase 1 from Bacillus anthracis.